A 79-amino-acid chain; its full sequence is Protein FAM236C (79 aa).

The tract at residues 19-48 (KGPQKDPEELVAVSDTAEDPSSGTGLPREP) is disordered.

Belongs to the FAM236 family.

The sequence is that of Protein FAM236C from Homo sapiens (Human).